A 469-amino-acid polypeptide reads, in one-letter code: Tetratricopeptide repeat protein 38 (469 aa).

3 TPR repeats span residues 107–140, 179–212, and 251–284; these read REML…HPTD, SYVK…DQTD, and CHVY…QCFA.

Belongs to the TTC38 family.

The sequence is that of Tetratricopeptide repeat protein 38 (ttc38) from Xenopus tropicalis (Western clawed frog).